Reading from the N-terminus, the 122-residue chain is Large ribosomal subunit protein uL14c (122 aa).

It belongs to the universal ribosomal protein uL14 family. In terms of assembly, part of the 50S ribosomal subunit.

The protein localises to the plastid. The protein resides in the chloroplast. Functionally, binds to 23S rRNA. The protein is Large ribosomal subunit protein uL14c of Tupiella akineta (Green alga).